Reading from the N-terminus, the 262-residue chain is Transmembrane protein 81 (262 aa).

Positions 1-30 are cleaved as a signal peptide; the sequence is MKAVATVFICGSLVLITYLPLVVTSPQTLA. Over 31–225 the chain is Extracellular; sequence IPEKLRQAVG…HLPGWRKKVS (195 aa). An N-linked (GlcNAc...) asparagine glycan is attached at N45. In terms of domain architecture, Ig-like spans 83–171; the sequence is TNWICGMLHF…VQQLKNLKLV (89 aa). An intrachain disulfide couples C104 to C160. The N-linked (GlcNAc...) asparagine glycan is linked to N211. The chain crosses the membrane as a helical span at residues 226–246; that stretch reads LALGVGIAAGVVGGVLVNVAL. The Cytoplasmic portion of the chain corresponds to 247 to 262; sequence CRVLGGTGGNGNLSSL.

Forms a complex with IZUMO1 and SPACA6 on spermatocyte cell membrane required for fertilization.

It is found in the cell membrane. Its function is as follows. Essential fertilization factor required for male fertility. Part of a conserved trimeric sperm complex with the essential fertilization factors IZUMO1 and SPACA6 which bridges sperm and oocyte membranes during fertilization by binding to IZUMO1R/JUNO on the oocyte. The sequence is that of Transmembrane protein 81 (Tmem81) from Rattus norvegicus (Rat).